Reading from the N-terminus, the 595-residue chain is Tyrosine-protein phosphatase cdcA (595 aa).

A disordered region spans residues 32–57 (TPFPYPAEQPKSPSKRRAQASPSKKR). A compositionally biased stretch (basic residues) spans 44–57 (PSKRRAQASPSKKR). The Tyrosine-protein phosphatase domain maps to 233 to 381 (LPSTVSEVRS…QGSFREWWFE (149 aa)). Cys-322 (phosphocysteine intermediate) is an active-site residue. Positions 392 to 595 (QPNPVTPGRS…GSPVRVKAQA (204 aa)) are disordered. Residues 449-461 (RKSHRKDSRHHPY) are compositionally biased toward basic residues. Basic and acidic residues predominate over residues 471-483 (VDKDTRKTRRSTD). Polar residues predominate over residues 502-526 (SKSPAASPGQRSISYSATVTASYTL).

This sequence belongs to the protein-tyrosine phosphatase family. Non-receptor class CDC14 subfamily.

The protein resides in the nucleus. The protein localises to the cytoplasm. Its subcellular location is the cell septum. The enzyme catalyses O-phospho-L-tyrosyl-[protein] + H2O = L-tyrosyl-[protein] + phosphate. Its function is as follows. Protein phosphatase which antagonizes mitotic cyclin-dependent kinase nimX, the inactivation of which is essential for exit from mitosis. To access its substrates, is released from nucleolar sequestration during mitosis. Plays an essential in coordinating the nuclear division cycle with cytokinesis through the cytokinesis checkpoint. Involved in chromosome segregation, where it is required for meiosis I spindle dissambly as well as for establishing two consecutive chromosome segregation phases. Required for the transcription of the two major endoglucanase genes eglA and eglB and growth on synthetic cellulose as the sole carbon source. This is Tyrosine-protein phosphatase cdcA (cdcA) from Emericella nidulans (strain FGSC A4 / ATCC 38163 / CBS 112.46 / NRRL 194 / M139) (Aspergillus nidulans).